A 259-amino-acid polypeptide reads, in one-letter code: Putative hydro-lyase Bphyt_4813 (259 aa).

Belongs to the D-glutamate cyclase family.

The protein is Putative hydro-lyase Bphyt_4813 of Paraburkholderia phytofirmans (strain DSM 17436 / LMG 22146 / PsJN) (Burkholderia phytofirmans).